Reading from the N-terminus, the 344-residue chain is Dihydroorotate dehydrogenase (quinone) (344 aa).

FMN is bound by residues 65-69 and Thr-89; that span reads AGLDK. Residue Lys-69 coordinates substrate. 114–118 contacts substrate; sequence NRMGF. FMN contacts are provided by Asn-145 and Asn-178. Asn-178 serves as a coordination point for substrate. Catalysis depends on Ser-181, which acts as the Nucleophile. A substrate-binding site is contributed by Asn-183. FMN contacts are provided by Lys-223 and Thr-251. 252–253 provides a ligand contact to substrate; that stretch reads NT. Residues Gly-274, Gly-303, and 324 to 325 contribute to the FMN site; that span reads YS.

It belongs to the dihydroorotate dehydrogenase family. Type 2 subfamily. In terms of assembly, monomer. The cofactor is FMN.

The protein resides in the cell membrane. The enzyme catalyses (S)-dihydroorotate + a quinone = orotate + a quinol. Its pathway is pyrimidine metabolism; UMP biosynthesis via de novo pathway; orotate from (S)-dihydroorotate (quinone route): step 1/1. In terms of biological role, catalyzes the conversion of dihydroorotate to orotate with quinone as electron acceptor. The sequence is that of Dihydroorotate dehydrogenase (quinone) from Cupriavidus pinatubonensis (strain JMP 134 / LMG 1197) (Cupriavidus necator (strain JMP 134)).